We begin with the raw amino-acid sequence, 186 residues long: MPIQNSPYQGFATLLNSSGHSVSPAELHGLLLGRSCAGAGFNAEEWLIDAAELLESEPQDNVRNALIGLQEMVKSELTGDDVTVVLLLPNDDAPLAERAAALGEWCQGFLTGFGLNCRDSSMLSTEATEVLQDLAAISQVQDALEESEDGESDYMEVMEYLRVAPLLLFSETKKADVPPAAKPSLH.

The protein belongs to the UPF0149 family.

The polypeptide is UPF0149 protein Pfl01_5435 (Pseudomonas fluorescens (strain Pf0-1)).